A 352-amino-acid chain; its full sequence is Cell division protein ZipA (352 aa).

At 1–6 (MKDLQL) the chain is on the periplasmic side. A helical transmembrane segment spans residues 7 to 27 (VLFVLGAIAIIAVLVHGFWSI). Residues 28-352 (RKQQPKSMKQ…KDYLRRLNAA (325 aa)) lie on the Cytoplasmic side of the membrane. 2 disordered regions span residues 78 to 120 (KPVL…HVEP) and 138 to 160 (PAPTASTSMNTPKKIFNPSTSTA). Polar residues predominate over residues 83 to 105 (TNLSQKPHSGTTKLTDTPLQDSL). Over residues 111–120 (HKTEPEHVEP) the composition is skewed to basic and acidic residues. Over residues 141 to 160 (TASTSMNTPKKIFNPSTSTA) the composition is skewed to polar residues.

Belongs to the ZipA family. In terms of assembly, interacts with FtsZ via their C-terminal domains.

The protein localises to the cell inner membrane. Functionally, essential cell division protein that stabilizes the FtsZ protofilaments by cross-linking them and that serves as a cytoplasmic membrane anchor for the Z ring. Also required for the recruitment to the septal ring of downstream cell division proteins. This chain is Cell division protein ZipA, found in Shewanella frigidimarina (strain NCIMB 400).